Here is a 535-residue protein sequence, read N- to C-terminus: Major glycerophosphoinositol permease GIT3 (535 aa).

The chain crosses the membrane as a helical span at residues 49–69; sequence VVTSVKANSLWPAFASGAGLF. Asn75 carries an N-linked (GlcNAc...) asparagine glycan. The next 5 helical transmembrane spans lie at 101–121, 137–157, 165–185, 204–224, and 232–252; these read NIAS…GYIS, LIFF…QGFF, FFLG…ASEF, AMID…IWIF, and LWRV…FMRL. Asn256 carries an N-linked (GlcNAc...) asparagine glycan. 6 consecutive transmembrane segments (helical) span residues 275–295, 324–344, 352–372, 378–398, 419–439, and 455–475; these read WWLI…IWFI, WGWS…GAIS, LTLA…SACL, HIAG…FGPG, GIAA…FPAI, and VPFY…IFFC. Asn532 is a glycosylation site (N-linked (GlcNAc...) asparagine).

It belongs to the major facilitator superfamily. Sugar transporter (TC 2.A.1.1) family.

It localises to the cell membrane. It catalyses the reaction sn-glycerol 3-phosphocholine(out) = sn-glycerol 3-phosphocholine(in). Its function is as follows. Glycerophosphodiester transporter that mediates uptake of glycerophosphocholine (GroPCho) with GIT4. GIT3 acts as the major GroPCho permease. Does not possess detectable glycerophosphoinositol (GroPIns) transport activity. The expanded ability to utilize GroPIns and GroPCho results from the organism's pathogenic nature and its need to occupy a variety of environments within its host organism. This possibility is buttressed by the fact that GroPIns and GroPCho are present and abundant in human fluids. The polypeptide is Major glycerophosphoinositol permease GIT3 (Candida albicans (strain SC5314 / ATCC MYA-2876) (Yeast)).